A 201-amino-acid chain; its full sequence is Dermatopontin (201 aa).

The first 18 residues, Met1 to Gly18, serve as a signal peptide directing secretion. Gln19 carries the post-translational modification Pyrrolidone carboxylic acid. The residue at position 23 (Tyr23) is a Sulfotyrosine. Repeat copies occupy residues Ser26 to Pro79, Asp70 to Tyr75, Thr80 to Tyr135, and Asp125 to Phe130. The tract at residues Ser26–Tyr135 is 2 X 53-55 AA tandem repeats. 5 cysteine pairs are disulfide-bonded: Cys50/Cys77, Cys90/Cys132, Cys106/Cys133, Cys139/Cys196, and Cys143/Cys189. The segment at Asp70 to Phe186 is 3 X 6 AA tandem repeats of D-R-[EQ]-W-[NQK]-[FY]. 4 positions are modified to sulfotyrosine: Tyr162, Tyr164, Tyr166, and Tyr167. A 2-3 repeat occupies Asp181–Phe186. Tyr194 is modified (sulfotyrosine).

This sequence belongs to the dermatopontin family. In terms of assembly, interacts with TGFB1, DCN and collagen. Post-translationally, sulfated on tyrosine residue(s). As to expression, expressed in skeletal muscle, heart, pancreas, skin and cultured fibroblasts.

The protein resides in the secreted. The protein localises to the extracellular space. It is found in the extracellular matrix. Functionally, seems to mediate adhesion by cell surface integrin binding. May serve as a communication link between the dermal fibroblast cell surface and its extracellular matrix environment. Enhances TGFB1 activity. Inhibits cell proliferation. Accelerates collagen fibril formation, and stabilizes collagen fibrils against low-temperature dissociation. The protein is Dermatopontin (DPT) of Bos taurus (Bovine).